The sequence spans 219 residues: Inner membrane protein YghB (219 aa).

At 1–17 (MAVIQDIIAALWQHDFA) the chain is on the cytoplasmic side. Residues 18–38 (ALANPHVVSVVYFVMFATLFL) traverse the membrane as a helical segment. At 39–67 (ENGLLPASFLPGDSLLLLAGALIAQDVMH) the chain is on the periplasmic side. The helical transmembrane segment at 68-88 (FLPTIGILTAAASLGCWLSYI) threads the bilayer. The Cytoplasmic portion of the chain corresponds to 89 to 160 (QGRWLGNTRT…RRFQFFNWLS (72 aa)). A helical transmembrane segment spans residues 161–181 (GLLWVTVVTSFGYALSMIPFV). At 182-191 (KRHEDQVMTF) the chain is on the periplasmic side. A helical membrane pass occupies residues 192–212 (LMILPVALLVAGLLGTLVVVI). The Cytoplasmic portion of the chain corresponds to 213-219 (KKKYCNA).

This sequence belongs to the DedA family.

Its subcellular location is the cell inner membrane. The polypeptide is Inner membrane protein YghB (yghB) (Salmonella typhimurium (strain LT2 / SGSC1412 / ATCC 700720)).